The sequence spans 169 residues: Large ribosomal subunit protein uL10 (169 aa).

This sequence belongs to the universal ribosomal protein uL10 family. Part of the ribosomal stalk of the 50S ribosomal subunit. The N-terminus interacts with L11 and the large rRNA to form the base of the stalk. The C-terminus forms an elongated spine to which L12 dimers bind in a sequential fashion forming a multimeric L10(L12)X complex.

Functionally, forms part of the ribosomal stalk, playing a central role in the interaction of the ribosome with GTP-bound translation factors. This chain is Large ribosomal subunit protein uL10, found in Orientia tsutsugamushi (strain Ikeda) (Rickettsia tsutsugamushi).